The primary structure comprises 78 residues: FXYD domain-containing ion transport regulator 7 (78 aa).

Over 1–22 (MATQVPTKVPQDPDPFYYDYDT) the chain is Extracellular. O-linked (GlcNAc) threonine glycosylation is found at Thr-3 and Thr-7. Residues 23-43 (VQTVGMTLATILFLLGILIIL) form a helical membrane-spanning segment. Over 44–78 (SKKVKCRKADSRSESPTCKSCKSELPSSAPGGGGV) the chain is Cytoplasmic. Positions 52–78 (ADSRSESPTCKSCKSELPSSAPGGGGV) are disordered. At Ser-71 the chain carries Phosphoserine.

It belongs to the FXYD family. As to quaternary structure, regulatory subunit of the sodium/potassium-transporting ATPase which is composed of a catalytic alpha subunit, a non-catalytic beta subunit and an additional regulatory subunit. The regulatory subunit, a member of the FXYD protein family, modulates the enzymatic activity in a tissue- and isoform-specific way by changing affinities of the Na+/K+-ATPase toward Na(+), K(+) or ATP. In terms of processing, O-glycosylated; required for stabilization and translocation to the plasma membrane.

The protein resides in the cell membrane. Associates with and regulates the activity of the sodium/potassium-transporting ATPase (NKA) which catalyzes the hydrolysis of ATP coupled with the exchange of Na(+) and K(+) ions across the plasma membrane. Reduces the apparent affinity for external K(+), an effect that depends on the presence of external Na(+) and voltage. Increases the apparent affinity for intracellular Na(+). This is FXYD domain-containing ion transport regulator 7 (FXYD7) from Bos taurus (Bovine).